A 500-amino-acid chain; its full sequence is Cytochrome P450 11B2, mitochondrial (500 aa).

A mitochondrion-targeting transit peptide spans 1 to 24; the sequence is MALRAKADVWLARPWQCLPRTRAL. Residue F381 participates in 21-hydroxyprogesterone binding. Residue C447 participates in heme binding.

This sequence belongs to the cytochrome P450 family. Heme is required as a cofactor. In terms of tissue distribution, adrenal gland.

Its subcellular location is the mitochondrion inner membrane. It carries out the reaction a steroid + 2 reduced [adrenodoxin] + O2 + 2 H(+) = an 11beta-hydroxysteroid + 2 oxidized [adrenodoxin] + H2O. The catalysed reaction is 21-hydroxyprogesterone + 2 reduced [adrenodoxin] + O2 + 2 H(+) = corticosterone + 2 oxidized [adrenodoxin] + H2O. The enzyme catalyses corticosterone + 2 reduced [adrenodoxin] + O2 + 2 H(+) = 18-hydroxycorticosterone + 2 oxidized [adrenodoxin] + H2O. It catalyses the reaction 18-hydroxycorticosterone + 2 reduced [adrenodoxin] + O2 + 2 H(+) = aldosterone + 2 oxidized [adrenodoxin] + 2 H2O. It carries out the reaction 11-deoxycortisol + 2 reduced [adrenodoxin] + O2 + 2 H(+) = cortisol + 2 oxidized [adrenodoxin] + H2O. The catalysed reaction is 21-hydroxyprogesterone + 2 reduced [adrenodoxin] + O2 + 2 H(+) = 18-hydroxy-11-deoxycorticosterone + 2 oxidized [adrenodoxin] + H2O. The enzyme catalyses cortisol + 2 reduced [adrenodoxin] + O2 + 2 H(+) = 18-hydroxycortisol + 2 oxidized [adrenodoxin] + H2O. It catalyses the reaction 18-hydroxycortisol + 2 reduced [adrenodoxin] + O2 + 2 H(+) = 18-oxocortisol + 2 oxidized [adrenodoxin] + 2 H2O. The protein operates within steroid biosynthesis. In terms of biological role, a cytochrome P450 monooxygenase that catalyzes the biosynthesis of aldosterone, the main mineralocorticoid in the human body responsible for salt and water homeostasis, thus involved in blood pressure regulation, arterial hypertension, and the development of heart failure. Catalyzes three sequential oxidative reactions of 11-deoxycorticosterone (21-hydroxyprogesterone), namely 11-beta hydroxylation, followed by two successive oxidations at C18 yielding 18-hydroxy and then 18-oxo intermediates (that would not leave the enzyme active site during the consecutive hydroxylation reactions), ending with the formation of aldosterone. Can also produce 18-hydroxycortisol and 18-oxocortisol, derived from successive oxidations of cortisol at C18, normally found at very low levels, but significantly increased in primary aldosteronism, the most common form of secondary hypertension. Mechanistically, uses molecular oxygen inserting one oxygen atom into a substrate and reducing the second into a water molecule. Two electrons are provided by NADPH via a two-protein mitochondrial transfer system comprising flavoprotein FDXR (adrenodoxin/ferredoxin reductase) and nonheme iron-sulfur protein FDX1 or FDX2 (adrenodoxin/ferredoxin). Could also be involved in the androgen metabolic pathway. This Mesocricetus auratus (Golden hamster) protein is Cytochrome P450 11B2, mitochondrial (CYP11B2).